The sequence spans 512 residues: Rab11 family-interacting protein 2 (512 aa).

Residues 1–120 (MMLSEQAQKW…DKQRRKTEWF (120 aa)) form the C2 domain. The necessary for its cellular translocation to the plasma membrane stretch occupies residues 15–102 (VQVTVLQAKD…GLDKFLGQVA (88 aa)). Disordered stretches follow at residues 174 to 231 (RKSD…MSDL) and 263 to 287 (PESGSLKSPHRRTLSFDTSKLNQPG). 2 stretches are compositionally biased toward polar residues: residues 221–231 (RLSSAHSMSDL) and 277–287 (SFDTSKLNQPG). Ser-227 carries the post-translational modification Phosphoserine; by MARK2. Phosphoserine is present on Ser-277. The NPF 1 signature appears at 323 to 325 (NPF). Residues 347–374 (KESKREKREKVSLFERVTGKRDSRRPDK) show a composition bias toward basic and acidic residues. The segment at 347 to 390 (KESKREKREKVSLFERVTGKRDSRRPDKLNNGGSDSPCDLKSPS) is disordered. Short sequence motifs (NPF) lie at residues 406-408 (NPF) and 440-442 (NPF). The region spanning 437 to 499 (PDNNPFDATA…EETPSILRVP (63 aa)) is the FIP-RBD domain. The tract at residues 465–512 (ELLRRKDTHIRELEDYIDNLLVRVMEETPSILRVPYEPSRKAGKFTNS) is necessary for interaction with AP2A1, RAB11A, subcellular location, endocytosis activity and homooligomerization.

As to quaternary structure, homooligomerizes in a Rab11-independent manner. Forms a heterooligomeric complex with RAB11FIP4. Interacts with AP2A1, MYO5B, RAB25 and REPS1. Interacts with RAB11A and RAB11B (activated GTP-bound form). Interacts with NPC1L1. Interacts (via NPF motifs) with EHD1 and EHD3. Interacts with TICAM2; this interaction directs RAB11FIP2 to the phagosome. Interacts with RAB14 and RAB25 (GTP-bound forms). Phosphorylation at Ser-227 by MARK2 regulates epithelial cell polarity.

Its subcellular location is the cell membrane. The protein localises to the recycling endosome membrane. Functionally, a Rab11 effector binding preferentially phosphatidylinositol 3,4,5-trisphosphate (PtdInsP3) and phosphatidic acid (PA) and acting in the regulation of the transport of vesicles from the endosomal recycling compartment (ERC) to the plasma membrane. Involved in insulin granule exocytosis. Also involved in receptor-mediated endocytosis and membrane trafficking of recycling endosomes, probably originating from clathrin-coated vesicles. Required in a complex with MYO5B and RAB11 for the transport of NPC1L1 to the plasma membrane. Also acts as a regulator of cell polarity. Plays an essential role in phagocytosis through a mechanism involving TICAM2, RAC1 and CDC42 Rho GTPases for controlling actin-dynamics. The chain is Rab11 family-interacting protein 2 (Rab11fip2) from Mus musculus (Mouse).